The chain runs to 148 residues: Hemoglobin subunit beta (148 aa).

The 146-residue stretch at 3 to 148 (DWTDAERSAI…VVSALGRQYH (146 aa)) folds into the Globin domain. Residues His-64 and His-93 each contribute to the heme b site.

Belongs to the globin family. In terms of assembly, heterotetramer of two alpha chains and two beta chains. In terms of tissue distribution, red blood cells.

Involved in oxygen transport from gills to the various peripheral tissues. The protein is Hemoglobin subunit beta (hbb) of Salmo salar (Atlantic salmon).